Here is a 640-residue protein sequence, read N- to C-terminus: DNA topoisomerase 3 (640 aa).

Residues 21 to 175 (RVLCVAEKNS…WRAQFSHLEP (155 aa)) form the Toprim domain. Mg(2+) is bound by residues Glu-27, Asp-137, and Asp-139. Residues 189-618 (DMKLVAAVEC…QLLPLYKEAF (430 aa)) enclose the Topo IA-type catalytic domain. The active-site O-(5'-phospho-DNA)-tyrosine intermediate is the Tyr-354.

This sequence belongs to the type IA topoisomerase family. The cofactor is Mg(2+).

The enzyme catalyses ATP-independent breakage of single-stranded DNA, followed by passage and rejoining.. Functionally, introduces a single-strand break via transesterification at a target site in duplex DNA. Releases the supercoiling and torsional tension of DNA introduced during the DNA replication and transcription by transiently cleaving and rejoining one strand of the DNA duplex. The scissile phosphodiester is attacked by the catalytic tyrosine of the enzyme, resulting in the formation of a DNA-(5'-phosphotyrosyl)-enzyme intermediate and the expulsion of a 3'-OH DNA strand. The chain is DNA topoisomerase 3 (TOP3) from Candidozyma auris (Yeast).